The chain runs to 404 residues: Probable tRNA sulfurtransferase (404 aa).

In terms of domain architecture, THUMP spans E61–E166. Residues L184–L185, H209–F210, R266, G288, and Q297 each bind ATP.

It belongs to the ThiI family.

The protein resides in the cytoplasm. It catalyses the reaction [ThiI sulfur-carrier protein]-S-sulfanyl-L-cysteine + a uridine in tRNA + 2 reduced [2Fe-2S]-[ferredoxin] + ATP + H(+) = [ThiI sulfur-carrier protein]-L-cysteine + a 4-thiouridine in tRNA + 2 oxidized [2Fe-2S]-[ferredoxin] + AMP + diphosphate. The enzyme catalyses [ThiS sulfur-carrier protein]-C-terminal Gly-Gly-AMP + S-sulfanyl-L-cysteinyl-[cysteine desulfurase] + AH2 = [ThiS sulfur-carrier protein]-C-terminal-Gly-aminoethanethioate + L-cysteinyl-[cysteine desulfurase] + A + AMP + 2 H(+). The protein operates within cofactor biosynthesis; thiamine diphosphate biosynthesis. Catalyzes the ATP-dependent transfer of a sulfur to tRNA to produce 4-thiouridine in position 8 of tRNAs, which functions as a near-UV photosensor. Also catalyzes the transfer of sulfur to the sulfur carrier protein ThiS, forming ThiS-thiocarboxylate. This is a step in the synthesis of thiazole, in the thiamine biosynthesis pathway. The sulfur is donated as persulfide by IscS. The sequence is that of Probable tRNA sulfurtransferase from Bacillus cereus (strain AH820).